A 450-amino-acid polypeptide reads, in one-letter code: Signal recognition particle 54 kDa protein (450 aa).

Residues Gly-107–Thr-114, Asp-188–Arg-192, and Thr-247–Asp-250 each bind GTP.

It belongs to the GTP-binding SRP family. SRP54 subfamily. In terms of assembly, part of the signal recognition particle protein translocation system, which is composed of SRP and FtsY. Archaeal SRP consists of a 7S RNA molecule of 300 nucleotides and two protein subunits: SRP54 and SRP19.

The protein localises to the cytoplasm. It catalyses the reaction GTP + H2O = GDP + phosphate + H(+). In terms of biological role, involved in targeting and insertion of nascent membrane proteins into the cytoplasmic membrane. Binds to the hydrophobic signal sequence of the ribosome-nascent chain (RNC) as it emerges from the ribosomes. The SRP-RNC complex is then targeted to the cytoplasmic membrane where it interacts with the SRP receptor FtsY. This Methanococcus maripaludis (strain C6 / ATCC BAA-1332) protein is Signal recognition particle 54 kDa protein.